The chain runs to 355 residues: DNA-directed RNA polymerase subunit alpha (355 aa).

Residues 1-233 (MVREKVRVST…DLFIPFLHKE (233 aa)) form an alpha N-terminal domain (alpha-NTD) region. Residues 268 to 355 (KKKIALKSIF…EIYCYSIFFH (88 aa)) form an alpha C-terminal domain (alpha-CTD) region.

Belongs to the RNA polymerase alpha chain family. In plastids the minimal PEP RNA polymerase catalytic core is composed of four subunits: alpha, beta, beta', and beta''. When a (nuclear-encoded) sigma factor is associated with the core the holoenzyme is formed, which can initiate transcription.

It localises to the plastid. The protein localises to the chloroplast. The enzyme catalyses RNA(n) + a ribonucleoside 5'-triphosphate = RNA(n+1) + diphosphate. Its function is as follows. DNA-dependent RNA polymerase catalyzes the transcription of DNA into RNA using the four ribonucleoside triphosphates as substrates. This is DNA-directed RNA polymerase subunit alpha from Jasminum nudiflorum (Winter jasmine).